The primary structure comprises 353 residues: Sulfate/thiosulfate import ATP-binding protein CysA (353 aa).

An ABC transporter domain is found at 3 to 237 (IQVKNIEKHF…PATPFVFDFL (235 aa)). 35–42 (GPSGCGKT) is a binding site for ATP.

It belongs to the ABC transporter superfamily. Sulfate/tungstate importer (TC 3.A.1.6) family. In terms of assembly, the complex is composed of two ATP-binding proteins (CysA), two transmembrane proteins (CysT and CysW) and a solute-binding protein (CysP).

It is found in the cell inner membrane. The catalysed reaction is sulfate(out) + ATP + H2O = sulfate(in) + ADP + phosphate + H(+). The enzyme catalyses thiosulfate(out) + ATP + H2O = thiosulfate(in) + ADP + phosphate + H(+). Part of the ABC transporter complex CysAWTP involved in sulfate/thiosulfate import. Responsible for energy coupling to the transport system. In Acinetobacter baylyi (strain ATCC 33305 / BD413 / ADP1), this protein is Sulfate/thiosulfate import ATP-binding protein CysA.